The following is a 291-amino-acid chain: 4-diphosphocytidyl-2-C-methyl-D-erythritol kinase (291 aa).

Lys8 is an active-site residue. 89 to 99 contributes to the ATP binding site; sequence PIGSGIGGGSS. Residue Asp131 is part of the active site.

The protein belongs to the GHMP kinase family. IspE subfamily.

The enzyme catalyses 4-CDP-2-C-methyl-D-erythritol + ATP = 4-CDP-2-C-methyl-D-erythritol 2-phosphate + ADP + H(+). It functions in the pathway isoprenoid biosynthesis; isopentenyl diphosphate biosynthesis via DXP pathway; isopentenyl diphosphate from 1-deoxy-D-xylulose 5-phosphate: step 3/6. Functionally, catalyzes the phosphorylation of the position 2 hydroxy group of 4-diphosphocytidyl-2C-methyl-D-erythritol. The protein is 4-diphosphocytidyl-2-C-methyl-D-erythritol kinase of Chlamydia abortus (strain DSM 27085 / S26/3) (Chlamydophila abortus).